The following is a 360-amino-acid chain: S-adenosylmethionine:tRNA ribosyltransferase-isomerase (360 aa).

It belongs to the QueA family. As to quaternary structure, monomer.

The protein resides in the cytoplasm. It catalyses the reaction 7-aminomethyl-7-carbaguanosine(34) in tRNA + S-adenosyl-L-methionine = epoxyqueuosine(34) in tRNA + adenine + L-methionine + 2 H(+). Its pathway is tRNA modification; tRNA-queuosine biosynthesis. Functionally, transfers and isomerizes the ribose moiety from AdoMet to the 7-aminomethyl group of 7-deazaguanine (preQ1-tRNA) to give epoxyqueuosine (oQ-tRNA). This Burkholderia pseudomallei (strain K96243) protein is S-adenosylmethionine:tRNA ribosyltransferase-isomerase.